Reading from the N-terminus, the 115-residue chain is U3-lycotoxin-Ls1h (115 aa).

The N-terminal stretch at 1 to 20 (MKFVLLFGVFLVTLFSYSSA) is a signal peptide. A propeptide spanning residues 21–44 (EMLDDFDQADEDELLSLIEKEEAR) is cleaved from the precursor. 4 cysteine pairs are disulfide-bonded: cysteine 48/cysteine 63, cysteine 55/cysteine 72, cysteine 62/cysteine 87, and cysteine 74/cysteine 85.

Belongs to the neurotoxin 19 (CSTX) family. 01 subfamily. As to expression, expressed by the venom gland.

Its subcellular location is the secreted. In Lycosa singoriensis (Wolf spider), this protein is U3-lycotoxin-Ls1h.